A 334-amino-acid chain; its full sequence is Isocitrate/homoisocitrate dehydrogenase (334 aa).

70–72 provides a ligand contact to NADH; sequence ATS. 8 residues coordinate (2R,3S)-homoisocitrate: Ser-72, Arg-85, Arg-88, Arg-98, Arg-118, Tyr-125, Lys-171, and Asn-173. NADH is bound at residue Asn-173. Mg(2+) contacts are provided by Asp-204, Asp-228, and Asp-232. Residues 261–265 and Asn-273 each bind NADH; that span reads GSAPD.

The protein belongs to the isocitrate and isopropylmalate dehydrogenases family. As to quaternary structure, homotetramer. Dimer of dimers. The homotetramer can transiently dissociate into homodimers. Mg(2+) serves as cofactor.

The enzyme catalyses (2R,3S)-homoisocitrate + NAD(+) = 2-oxoadipate + CO2 + NADH. The catalysed reaction is D-threo-isocitrate + NAD(+) = 2-oxoglutarate + CO2 + NADH. Its pathway is amino-acid biosynthesis; L-lysine biosynthesis via AAA pathway; L-alpha-aminoadipate from 2-oxoglutarate: step 4/5. Functionally, catalyzes the NAD(+)-dependent oxidative decarboxylation of homoisocitrate to 2-oxoadipate (alpha-ketoadipate), a reaction involved in lysine biosynthesis through the alpha-aminoadipate pathway. In addition, has high activity with isocitrate, but is inactive with 3-isopropylmalate. This is Isocitrate/homoisocitrate dehydrogenase (hicd) from Thermus thermophilus (strain ATCC BAA-163 / DSM 7039 / HB27).